A 504-amino-acid chain; its full sequence is Maturase K (504 aa).

Belongs to the intron maturase 2 family. MatK subfamily.

It is found in the plastid. The protein resides in the chloroplast. Usually encoded in the trnK tRNA gene intron. Probably assists in splicing its own and other chloroplast group II introns. This is Maturase K from Pachira aquatica (Guiana chestnut).